Reading from the N-terminus, the 311-residue chain is tRNA dimethylallyltransferase (311 aa).

13 to 20 provides a ligand contact to ATP; it reads GPTASGKT. Position 15-20 (15-20) interacts with substrate; that stretch reads TASGKT. Interaction with substrate tRNA stretches follow at residues 38-41 and 166-170; these read DSMQ and QRGLR.

The protein belongs to the IPP transferase family. In terms of assembly, monomer. Mg(2+) is required as a cofactor.

The enzyme catalyses adenosine(37) in tRNA + dimethylallyl diphosphate = N(6)-dimethylallyladenosine(37) in tRNA + diphosphate. Catalyzes the transfer of a dimethylallyl group onto the adenine at position 37 in tRNAs that read codons beginning with uridine, leading to the formation of N6-(dimethylallyl)adenosine (i(6)A). This Staphylococcus aureus (strain MSSA476) protein is tRNA dimethylallyltransferase.